The following is a 143-amino-acid chain: Putative aryl-alcohol dehydrogenase AAD15 (143 aa).

The protein belongs to the aldo/keto reductase family. Aldo/keto reductase 2 subfamily.

In terms of biological role, putative aryl-alcohol dehydrogenase. The polypeptide is Putative aryl-alcohol dehydrogenase AAD15 (AAD15) (Saccharomyces cerevisiae (strain ATCC 204508 / S288c) (Baker's yeast)).